A 467-amino-acid chain; its full sequence is Cysteine protease ATG4a (467 aa).

Residues 1–35 are disordered; it reads MKALCDRFVPQQCSSSSKSDTHDKSPLVSDSGPSD. C170 (nucleophile) is an active-site residue. Catalysis depends on residues D364 and H366. Residues 448-467 are disordered; the sequence is NYGFADDDSEDEREDDWQML. The span at 452–467 shows a compositional bias: acidic residues; it reads ADDDSEDEREDDWQML.

It belongs to the peptidase C54 family. In terms of assembly, interacts with ATG8. As to expression, constitutively expressed.

It localises to the cytoplasm. It catalyses the reaction [protein]-C-terminal L-amino acid-glycyl-phosphatidylethanolamide + H2O = [protein]-C-terminal L-amino acid-glycine + a 1,2-diacyl-sn-glycero-3-phosphoethanolamine. Cysteine protease that plays a key role in autophagy by mediating both proteolytic activation and delipidation of ATG8 family proteins. The protease activity is required for proteolytic activation of ATG8 family proteins: cleaves the C-terminal amino acid of ATG8 proteins to reveal a C-terminal glycine. Exposure of the glycine at the C-terminus is essential for ATG8 proteins conjugation to phosphatidylethanolamine (PE) and insertion to membranes, which is necessary for autophagy. In addition to the protease activity, also mediates delipidation of PE-conjugated ATG8 proteins. This is Cysteine protease ATG4a from Arabidopsis thaliana (Mouse-ear cress).